The following is a 538-amino-acid chain: Solute carrier family 2, facilitated glucose transporter member 9 (538 aa).

Residues 1 to 34 are Cytoplasmic-facing; it reads MDSRELALASLMCDTGGPGELSVGHQQRRTKKWS. S3 is modified (phosphoserine). A helical transmembrane segment spans residues 35-54; that stretch reads FSLVVAALVGAFGSSFLYGY. 2 N-linked (GlcNAc...) asparagine glycosylation sites follow: N55 and N71. At 55–88 the chain is on the extracellular side; that stretch reads NLSVVNAPTPYIKAFYNGTWYRRHGQPIDPDTLT. The helical transmembrane segment at 89-109 threads the bilayer; it reads LLWSVTVSIFAIGGLVGTLMV. The Cytoplasmic portion of the chain corresponds to 110-120; the sequence is KMIGKFLGRKS. Residues 121-143 form a helical membrane-spanning segment; sequence TLLVNNGFAISAALLMACSLRAG. At 144–148 the chain is on the extracellular side; it reads TFEML. A helical transmembrane segment spans residues 149 to 170; it reads IVGRFIMGVDGGIALSALPMYL. Residues 171 to 181 lie on the Cytoplasmic side of the membrane; that stretch reads NEISPKEIRGS. Residues 182-200 form a helical membrane-spanning segment; the sequence is LGQVTAIFICIGVFSGQLL. Residues 201–211 lie on the Extracellular side of the membrane; it reads GLPELLGREST. The chain crosses the membrane as a helical span at residues 212 to 233; it reads WPYLFGVIIVPALVQLASLPFL. Residues 234 to 297 are Cytoplasmic-facing; that stretch reads PESPRYLLFE…LLRAPFVRWQ (64 aa). Residues 298–319 traverse the membrane as a helical segment; it reads VITVIITMASYQLCGLNAIWFY. Topologically, residues 320-333 are extracellular; that stretch reads TNSIFGKAGIPQDK. The helical transmembrane segment at 334-356 threads the bilayer; it reads IPYITLSTGGIETLAAIFSGLVI. Residues 357-362 are Cytoplasmic-facing; sequence ERLGRR. The helical transmembrane segment at 363–385 threads the bilayer; the sequence is PLLIGGFGLMALFFGTLTATLTL. Topologically, residues 386-390 are extracellular; it reads QDQAP. Residues 391 to 418 form a helical membrane-spanning segment; that stretch reads WVPYLSIVCILAIIASFCSGPGGIPFIL. At 419-429 the chain is on the cytoplasmic side; that stretch reads TGEFFQQSERP. Residues 430–453 traverse the membrane as a helical segment; sequence AAFMIAGTVNWLSNFAVGLLFPFI. Over 454-458 the chain is Extracellular; that stretch reads QKSLD. A helical transmembrane segment spans residues 459 to 480; that stretch reads SYCFLVFATICIAGATYFYFVL. Residues 481 to 538 are Cytoplasmic-facing; sequence PETKNRTHAEISQAFAKRNKAQPPEVKADSAMTEEKANSQTEPDSSSTLDSYGQNKIV. The segment at 495-538 is disordered; the sequence is FAKRNKAQPPEVKADSAMTEEKANSQTEPDSSSTLDSYGQNKIV. Positions 518 to 538 are enriched in polar residues; the sequence is NSQTEPDSSSTLDSYGQNKIV.

The protein belongs to the major facilitator superfamily. Sugar transporter (TC 2.A.1.1) family. In terms of processing, N-glycosylated. Highly expressed in the intestine, with high expression in the jejunum and ileum, the segments of the intestine that perform the majority of urate excretion. Isoform 1: Widely expressed. Isoform 1: In kidney, expressed at low levels in proximal tubules. Isoform 2: Primarily expressed in liver and kidney; with specific expression in distal convoluted and connecting tubules of kidney.

Its subcellular location is the basolateral cell membrane. The protein localises to the apical cell membrane. It carries out the reaction urate(out) = urate(in). Functionally, high-capacity urate transporter, which may play a role in the urate reabsorption by proximal tubules. May have a residual high-affinity, low-capacity glucose and fructose transporter activity. Transports urate at rates 45- to 60-fold faster than glucose. Does not transport galactose. May mediate small uptake of adenine but not of other nucleobases. In Mus musculus (Mouse), this protein is Solute carrier family 2, facilitated glucose transporter member 9.